A 271-amino-acid chain; its full sequence is MLLTVDVRNTNIVLGLFTGSGEHSKLVQDWRMRTDARMTADELALIFRGLLGAHTDQITGVSALSTVPSVLREIRVMLTRYWGHVPHVLVEPGVRTGVPLLVDNPKEVGADRIVNSLAAHHLYDAPCIVVDFGTSTCVDVVSAKGEFLGGAIAPGLEISSDALASQSAALRKVELVRPRSVVGKNTVECMQSGAVFGFAGLVDGLVRRVRKELPAFSGSDVVVIATGDRAPLIMPETETVDEHEPDLTLEGLRLVYERNQARRGARRSPLE.

6–13 contributes to the ATP binding site; that stretch reads DVRNTNIV. 109-112 contacts substrate; it reads GADR. The active-site Proton acceptor is the D111. D131 contacts K(+). T134 contacts ATP. A substrate-binding site is contributed by T186.

This sequence belongs to the type III pantothenate kinase family. As to quaternary structure, homodimer. The cofactor is NH4(+). It depends on K(+) as a cofactor.

Its subcellular location is the cytoplasm. It carries out the reaction (R)-pantothenate + ATP = (R)-4'-phosphopantothenate + ADP + H(+). The protein operates within cofactor biosynthesis; coenzyme A biosynthesis; CoA from (R)-pantothenate: step 1/5. Its function is as follows. Catalyzes the phosphorylation of pantothenate (Pan), the first step in CoA biosynthesis. This chain is Type III pantothenate kinase, found in Rhodococcus jostii (strain RHA1).